The primary structure comprises 225 residues: Heptaprenylglyceryl phosphate synthase (225 aa).

Lys-6 contacts sn-glycerol 1-phosphate. Mg(2+) is bound by residues Asp-8 and Thr-34. Sn-glycerol 1-phosphate contacts are provided by residues 153–158 (YIEYSG), Gly-183, and 203–204 (GN).

The protein belongs to the GGGP/HepGP synthase family. Group I subfamily. In terms of assembly, homodimer. Requires Mg(2+) as cofactor.

It catalyses the reaction sn-glycerol 1-phosphate + all-trans-heptaprenyl diphosphate = 3-heptaprenyl-sn-glycero-1-phosphate + diphosphate. The protein operates within membrane lipid metabolism; glycerophospholipid metabolism. In terms of biological role, prenyltransferase that catalyzes in vivo the transfer of the heptaprenyl moiety of heptaprenyl pyrophosphate (HepPP; 35 carbon atoms) to the C3 hydroxyl of sn-glycerol-1-phosphate (G1P), producing heptaprenylglyceryl phosphate (HepGP). This reaction is an ether-bond-formation step in the biosynthesis of archaea-type G1P-based membrane lipids found in Bacillales. The sequence is that of Heptaprenylglyceryl phosphate synthase from Listeria welshimeri serovar 6b (strain ATCC 35897 / DSM 20650 / CCUG 15529 / CIP 8149 / NCTC 11857 / SLCC 5334 / V8).